The primary structure comprises 261 residues: MKIQKNAVNVLERTSAYLRAGLLTKQPAWYNVVASVPPLKKFERVPKLTNPSNDRINGQLHSLDSSAGNNGMFKTRYTAKDRSNASKQLYSASKLTYIEDQLREIFYKQHPWELSRPKILIENNGDEKYDWSHMQQIGKPLDGESVVQRTLYLMKNKEAPSLVLAYDMARYEFYRLRMQQHIEEQVAQEEAEMFGSVFGPSAIEYGIQKEQKVIDTWKRKAIIQTEIMAARRINPSESWATDEKDPKKNDDIEEDVEEIKL.

A disordered region spans residues N234–L261. Positions T241–D250 are enriched in basic and acidic residues. Over residues D251–L261 the composition is skewed to acidic residues.

Belongs to the mitochondrion-specific ribosomal protein mS23 family. In terms of assembly, component of the mitochondrial small ribosomal subunit.

Its subcellular location is the mitochondrion. The sequence is that of Small ribosomal subunit protein mS23 (RSM25) from Vanderwaltozyma polyspora (strain ATCC 22028 / DSM 70294 / BCRC 21397 / CBS 2163 / NBRC 10782 / NRRL Y-8283 / UCD 57-17) (Kluyveromyces polysporus).